A 494-amino-acid chain; its full sequence is Ribosomal lysine N-methyltransferase 4 (494 aa).

The SET domain maps to 25–265 (PKIEIKDLCC…KNEQVYNIYG (241 aa)). S-adenosyl-L-methionine is bound at residue Tyr-264.

This sequence belongs to the class V-like SAM-binding methyltransferase superfamily. Histone-lysine methyltransferase family. SETD6 subfamily.

Its subcellular location is the nucleus. In terms of biological role, S-adenosyl-L-methionine-dependent protein-lysine N-methyltransferase that monomethylates 60S ribosomal protein L42 (RPL42A and RPL42B) at 'Lys-55'. The polypeptide is Ribosomal lysine N-methyltransferase 4 (Saccharomyces cerevisiae (strain ATCC 204508 / S288c) (Baker's yeast)).